The chain runs to 173 residues: ATP-dependent protease subunit HslV (173 aa).

Residue T2 is part of the active site. 3 residues coordinate Na(+): G158, D161, and T164.

This sequence belongs to the peptidase T1B family. HslV subfamily. A double ring-shaped homohexamer of HslV is capped on each side by a ring-shaped HslU homohexamer. The assembly of the HslU/HslV complex is dependent on binding of ATP.

It is found in the cytoplasm. The enzyme catalyses ATP-dependent cleavage of peptide bonds with broad specificity.. With respect to regulation, allosterically activated by HslU binding. Protease subunit of a proteasome-like degradation complex believed to be a general protein degrading machinery. The sequence is that of ATP-dependent protease subunit HslV from Actinobacillus succinogenes (strain ATCC 55618 / DSM 22257 / CCUG 43843 / 130Z).